The sequence spans 312 residues: Isethionate sulfite-lyase activating enzyme (312 aa).

Positions 22–309 (HDGPGIRTIV…VDETRGAVTE (288 aa)) constitute a Radical SAM core domain. [4Fe-4S] cluster-binding residues include cysteine 36, cysteine 40, cysteine 43, cysteine 62, cysteine 65, cysteine 68, cysteine 72, cysteine 92, cysteine 95, cysteine 100, and cysteine 104. 42-44 (WCS) lines the S-adenosyl-L-methionine pocket. 2 consecutive 4Fe-4S ferredoxin-type domains span residues 53–82 (PQVA…VNED) and 83–115 (GTLS…YGEN). Residues glycine 144, 193 to 195 (DVK), and histidine 267 each bind S-adenosyl-L-methionine.

It belongs to the organic radical-activating enzymes family. Monomer. Requires [4Fe-4S] cluster as cofactor.

The enzyme catalyses glycyl-[protein] + reduced [flavodoxin] + S-adenosyl-L-methionine = glycin-2-yl radical-[protein] + semiquinone [flavodoxin] + 5'-deoxyadenosine + L-methionine + H(+). Its pathway is organosulfur degradation; alkanesulfonate degradation. Involved in an anaerobic respiration pathway that converts the sulfonate taurine (2-aminoethanesulfonate) to ammonia, acetate and sulfide. Catalyzes activation of the isethionate sulfite-lyase IslA under anaerobic conditions by generation of an organic free radical on a glycine residue, via a homolytic cleavage of S-adenosyl-L-methionine (SAM). In Bilophila wadsworthia (strain 3_1_6), this protein is Isethionate sulfite-lyase activating enzyme.